A 394-amino-acid chain; its full sequence is Elongation factor Tu (394 aa).

The tr-type G domain occupies 10 to 204; it reads KTHLNVGTIG…TLDTYIEDPV (195 aa). The G1 stretch occupies residues 19-26; the sequence is GHVDHGKT. 19-26 provides a ligand contact to GTP; it reads GHVDHGKT. Thr-26 contributes to the Mg(2+) binding site. The interval 60 to 64 is G2; sequence GITIK. The tract at residues 81–84 is G3; that stretch reads DCPG. Residues 81–85 and 136–139 each bind GTP; these read DCPGH and NKCD. The G4 stretch occupies residues 136–139; it reads NKCD. The segment at 174–176 is G5; that stretch reads SAL.

The protein belongs to the TRAFAC class translation factor GTPase superfamily. Classic translation factor GTPase family. EF-Tu/EF-1A subfamily. In terms of assembly, monomer.

It is found in the cytoplasm. It catalyses the reaction GTP + H2O = GDP + phosphate + H(+). GTP hydrolase that promotes the GTP-dependent binding of aminoacyl-tRNA to the A-site of ribosomes during protein biosynthesis. This Aster yellows witches'-broom phytoplasma (strain AYWB) protein is Elongation factor Tu.